A 303-amino-acid chain; its full sequence is N-acetyl-D-glucosamine kinase (303 aa).

ATP is bound by residues 4 to 11 (GFDIGGTK) and 133 to 140 (GVGGGLVL). Positions 157, 177, 179, and 184 each coordinate Zn(2+).

This sequence belongs to the ROK (NagC/XylR) family. NagK subfamily.

It carries out the reaction N-acetyl-D-glucosamine + ATP = N-acetyl-D-glucosamine 6-phosphate + ADP + H(+). It functions in the pathway cell wall biogenesis; peptidoglycan recycling. In terms of biological role, catalyzes the phosphorylation of N-acetyl-D-glucosamine (GlcNAc) derived from cell-wall degradation, yielding GlcNAc-6-P. In Salmonella heidelberg (strain SL476), this protein is N-acetyl-D-glucosamine kinase.